Reading from the N-terminus, the 461-residue chain is L-seryl-tRNA(Sec) selenium transferase (461 aa).

Lys-294 bears the N6-(pyridoxal phosphate)lysine mark.

It belongs to the SelA family. It depends on pyridoxal 5'-phosphate as a cofactor.

The protein resides in the cytoplasm. It catalyses the reaction L-seryl-tRNA(Sec) + selenophosphate + H(+) = L-selenocysteinyl-tRNA(Sec) + phosphate. The protein operates within aminoacyl-tRNA biosynthesis; selenocysteinyl-tRNA(Sec) biosynthesis; selenocysteinyl-tRNA(Sec) from L-seryl-tRNA(Sec) (bacterial route): step 1/1. Functionally, converts seryl-tRNA(Sec) to selenocysteinyl-tRNA(Sec) required for selenoprotein biosynthesis. The chain is L-seryl-tRNA(Sec) selenium transferase from Haemophilus influenzae (strain 86-028NP).